We begin with the raw amino-acid sequence, 108 residues long: uncharacterized protein (108 aa).

2 stretches are compositionally biased toward basic and acidic residues: residues 1-15 (MSEA…EVLV) and 53-69 (KLKD…RNSE). Residues 1-77 (MSEAKDNGSR…SELDQDEEDK (77 aa)) are disordered.

This is an uncharacterized protein from Homo sapiens (Human).